Here is a 573-residue protein sequence, read N- to C-terminus: Chromosomal replication initiator protein DnaA (573 aa).

The domain I, interacts with DnaA modulators stretch occupies residues 1-85 (MSQNSSSLLE…TKVLSMRMGR (85 aa)). Positions 85–231 (RSFSLAVSVE…TPAHNPNREV (147 aa)) are domain II. Positions 91 to 232 (VSVEPSRDGE…PAHNPNREVS (142 aa)) are disordered. A compositionally biased stretch (low complexity) spans 116 to 169 (PYPGQGPQSPQGQQGQQGQHPVQQEVRAHAPAPHQQGQHQAAQHQPPANQAPGQ). Positions 178–191 (QASQSAGAWEQTHS) are enriched in polar residues. The segment covering 202–213 (SPAPVEPPPQPA) has biased composition (pro residues). The segment at 232–448 (SLNPKYTFEN…GALIRVSAYS (217 aa)) is domain III, AAA+ region. ATP-binding residues include Gly276, Gly278, Lys279, and Thr280. The interval 449–573 (SLINQPIDKE…TQLIKSRGRN (125 aa)) is domain IV, binds dsDNA.

This sequence belongs to the DnaA family. As to quaternary structure, oligomerizes as a right-handed, spiral filament on DNA at oriC.

The protein resides in the cytoplasm. In terms of biological role, plays an essential role in the initiation and regulation of chromosomal replication. ATP-DnaA binds to the origin of replication (oriC) to initiate formation of the DNA replication initiation complex once per cell cycle. Binds the DnaA box (a 9 base pair repeat at the origin) and separates the double-stranded (ds)DNA. Forms a right-handed helical filament on oriC DNA; dsDNA binds to the exterior of the filament while single-stranded (ss)DNA is stabiized in the filament's interior. The ATP-DnaA-oriC complex binds and stabilizes one strand of the AT-rich DNA unwinding element (DUE), permitting loading of DNA polymerase. After initiation quickly degrades to an ADP-DnaA complex that is not apt for DNA replication. Binds acidic phospholipids. In Corynebacterium efficiens (strain DSM 44549 / YS-314 / AJ 12310 / JCM 11189 / NBRC 100395), this protein is Chromosomal replication initiator protein DnaA.